A 156-amino-acid chain; its full sequence is 6,7-dimethyl-8-ribityllumazine synthase (156 aa).

5-amino-6-(D-ribitylamino)uracil-binding positions include Phe-22, 57 to 59 (AYE), and 81 to 83 (TVI). 86–87 (GT) is a (2S)-2-hydroxy-3-oxobutyl phosphate binding site. His-89 acts as the Proton donor in catalysis. Phe-114 lines the 5-amino-6-(D-ribitylamino)uracil pocket. Arg-128 contributes to the (2S)-2-hydroxy-3-oxobutyl phosphate binding site.

The protein belongs to the DMRL synthase family. As to quaternary structure, forms an icosahedral capsid composed of 60 subunits, arranged as a dodecamer of pentamers.

It carries out the reaction (2S)-2-hydroxy-3-oxobutyl phosphate + 5-amino-6-(D-ribitylamino)uracil = 6,7-dimethyl-8-(1-D-ribityl)lumazine + phosphate + 2 H2O + H(+). Its pathway is cofactor biosynthesis; riboflavin biosynthesis; riboflavin from 2-hydroxy-3-oxobutyl phosphate and 5-amino-6-(D-ribitylamino)uracil: step 1/2. Functionally, catalyzes the formation of 6,7-dimethyl-8-ribityllumazine by condensation of 5-amino-6-(D-ribitylamino)uracil with 3,4-dihydroxy-2-butanone 4-phosphate. This is the penultimate step in the biosynthesis of riboflavin. The polypeptide is 6,7-dimethyl-8-ribityllumazine synthase (Salmonella heidelberg (strain SL476)).